The primary structure comprises 354 residues: DNA integrity scanning protein DisA (354 aa).

A DAC domain is found at 6-144 (GIGIKNVLKI…GDIKYVLRES (139 aa)). ATP is bound by residues Gly-73, Leu-91, and 104 to 108 (TRHRT).

The protein belongs to the DisA family. As to quaternary structure, homooctamer. The cofactor is Mg(2+).

The catalysed reaction is 2 ATP = 3',3'-c-di-AMP + 2 diphosphate. Functionally, participates in a DNA-damage check-point that is active prior to asymmetric division when DNA is damaged. DisA forms globular foci that rapidly scan along the chromosomes during sporulation, searching for lesions. When a lesion is present, DisA pauses at the lesion site. This triggers a cellular response that culminates in a temporary block in sporulation initiation. In terms of biological role, also has diadenylate cyclase activity, catalyzing the condensation of 2 ATP molecules into cyclic di-AMP (c-di-AMP). c-di-AMP acts as a signaling molecule that couples DNA integrity with progression of sporulation. The rise in c-di-AMP level generated by DisA while scanning the chromosome, operates as a positive signal that advances sporulation; upon encountering a lesion, the DisA focus arrests at the damaged site and halts c-di-AMP synthesis. The chain is DNA integrity scanning protein DisA from Clostridium beijerinckii (strain ATCC 51743 / NCIMB 8052) (Clostridium acetobutylicum).